The chain runs to 196 residues: Protein GrpE (196 aa).

The disordered stretch occupies residues 1-39; sequence MSSKEQKTPEGQAPEEIIMDQHEEIEAVEPEASAEQVDP.

Belongs to the GrpE family. Homodimer.

The protein resides in the cytoplasm. Functionally, participates actively in the response to hyperosmotic and heat shock by preventing the aggregation of stress-denatured proteins, in association with DnaK and GrpE. It is the nucleotide exchange factor for DnaK and may function as a thermosensor. Unfolded proteins bind initially to DnaJ; upon interaction with the DnaJ-bound protein, DnaK hydrolyzes its bound ATP, resulting in the formation of a stable complex. GrpE releases ADP from DnaK; ATP binding to DnaK triggers the release of the substrate protein, thus completing the reaction cycle. Several rounds of ATP-dependent interactions between DnaJ, DnaK and GrpE are required for fully efficient folding. The protein is Protein GrpE of Escherichia coli O139:H28 (strain E24377A / ETEC).